A 306-amino-acid chain; its full sequence is tRNA pseudouridine synthase B (306 aa).

Asp47 (nucleophile) is an active-site residue.

It belongs to the pseudouridine synthase TruB family. Type 1 subfamily.

It carries out the reaction uridine(55) in tRNA = pseudouridine(55) in tRNA. Responsible for synthesis of pseudouridine from uracil-55 in the psi GC loop of transfer RNAs. This Neisseria gonorrhoeae (strain ATCC 700825 / FA 1090) protein is tRNA pseudouridine synthase B.